The primary structure comprises 98 residues: NADH-ubiquinone oxidoreductase chain 4L (98 aa).

The next 3 helical transmembrane spans lie at 1-21 (MSITYMNMFMAFTISLLGLLM), 29-49 (SLLCLEGMMLSLFVMMTMAIL), and 61-81 (IILLVFAACEAALGLSLLVMV).

It belongs to the complex I subunit 4L family. In terms of assembly, core subunit of respiratory chain NADH dehydrogenase (Complex I) which is composed of 45 different subunits.

It is found in the mitochondrion inner membrane. The enzyme catalyses a ubiquinone + NADH + 5 H(+)(in) = a ubiquinol + NAD(+) + 4 H(+)(out). Functionally, core subunit of the mitochondrial membrane respiratory chain NADH dehydrogenase (Complex I) which catalyzes electron transfer from NADH through the respiratory chain, using ubiquinone as an electron acceptor. Part of the enzyme membrane arm which is embedded in the lipid bilayer and involved in proton translocation. This chain is NADH-ubiquinone oxidoreductase chain 4L (MT-ND4L), found in Mesophylla macconnelli (MacConnell's bat).